The primary structure comprises 245 residues: Small ribosomal subunit protein uS2 (245 aa).

It belongs to the universal ribosomal protein uS2 family.

In Pseudomonas putida (strain W619), this protein is Small ribosomal subunit protein uS2.